The primary structure comprises 520 residues: Glucose starvation modulator protein 1 (520 aa).

A DNA-binding region (zn(2)-C6 fungal-type) is located at residues 20–48; the sequence is CSFCHSKHLQCSNNRPCKNCVKRNIADQC. Disordered stretches follow at residues 63-104 and 194-213; these read AKNK…SSGR and PASP…PNEM. Over residues 74 to 85 the composition is skewed to low complexity; the sequence is SLESSSSPFSPL. Residues 90–104 are compositionally biased toward polar residues; it reads INSQSSQPLDPSSGR. The PAS domain maps to 376-445; it reads DYEKLSHLNS…FKLFKSVAVG (70 aa).

It belongs to the ERT1/acuK family.

The protein localises to the nucleus. Transcription factor which regulates nonfermentable carbon utilization. The protein is Glucose starvation modulator protein 1 (GSM1) of Meyerozyma guilliermondii (strain ATCC 6260 / CBS 566 / DSM 6381 / JCM 1539 / NBRC 10279 / NRRL Y-324) (Yeast).